A 167-amino-acid polypeptide reads, in one-letter code: DNA-directed RNA polymerase II subunit rpb-9 (167 aa).

The segment at 28–49 (DDMYDQNGASPAPSQNEKPGKS) is disordered. Polar residues predominate over residues 34–44 (NGASPAPSQNE). Zn(2+) is bound by residues Cys59, Cys62, Cys81, Cys84, Cys128, Cys131, Cys156, and Cys161. The C4-type zinc finger occupies 59-84 (CPECNNMLYPREDKESRVLMYSCRNC). A TFIIS-type zinc finger spans residues 124-166 (EEHQCPVCGKSKAVFFQAQTKKAEEEMRLYYVCASQDCQHRWT).

It belongs to the archaeal RpoM/eukaryotic RPA12/RPB9/RPC11 RNA polymerase family. As to quaternary structure, component of the RNA polymerase II (Pol II) complex consisting of 12 subunits. In terms of tissue distribution, expressed in the soma and in the germline.

The protein resides in the nucleus. It is found in the nucleolus. DNA-dependent RNA polymerase catalyzes the transcription of DNA into RNA using the four ribonucleoside triphosphates as substrates. Component of RNA polymerase II which synthesizes mRNA precursors and many functional non-coding RNAs. Pol II is the central component of the basal RNA polymerase II transcription machinery. It is composed of mobile elements that move relative to each other. RPB9 is part of the upper jaw surrounding the central large cleft and thought to grab the incoming DNA template. Recruits ints-6, a component of the Integrator complex to PIWI-interacting RNA (piRNA) genes, to mediate Integrator complex-dependent cleavage of 3' ends of nascent transcripts upon RNA Pol II backtracking to terminate transcription and generate piRNA precursors. Promotes the biogenesis of secondary 22G-siRNAs (a class of 22 nucleotide siRNAs that possess a triphosphorylated guanine residue at the 5'-end). Involved in gene silencing mediated by a class of 21 nucleotide piRNAs that possess a uracil residue at the 5'-end (also called 21U-RNAs) and guide the Piwi protein prg-1 to its DNA targets for silencing. Plays a role in small RNA-directed transgenerational epigenetic inheritance (also called RNAe) over several generations. Not required for the transgenerational inheritance of exogenous small interfering RNAs (RNAi). May play a role in the silencing of the DNA transposable elements from the DNA transposon families, Chapaev-2 and CEMUDR1. This chain is DNA-directed RNA polymerase II subunit rpb-9, found in Caenorhabditis elegans.